A 372-amino-acid polypeptide reads, in one-letter code: Maltose/maltodextrin import ATP-binding protein MalK (372 aa).

The region spanning valine 4–isoleucine 234 is the ABC transporter domain. Residue glycine 36 to serine 43 coordinates ATP.

This sequence belongs to the ABC transporter superfamily. Maltooligosaccharide importer (TC 3.A.1.1.1) family. As to quaternary structure, the complex is composed of two ATP-binding proteins (MalK), two transmembrane proteins (MalG and MalK) and a solute-binding protein (MalE).

It localises to the cell inner membrane. The enzyme catalyses D-maltose(out) + ATP + H2O = D-maltose(in) + ADP + phosphate + H(+). Part of the ABC transporter complex MalEFGK involved in maltose/maltodextrin import. Responsible for energy coupling to the transport system. The polypeptide is Maltose/maltodextrin import ATP-binding protein MalK (Vibrio parahaemolyticus serotype O3:K6 (strain RIMD 2210633)).